The chain runs to 86 residues: Cell division topological specificity factor (86 aa).

The protein belongs to the MinE family.

In terms of biological role, prevents the cell division inhibition by proteins MinC and MinD at internal division sites while permitting inhibition at polar sites. This ensures cell division at the proper site by restricting the formation of a division septum at the midpoint of the long axis of the cell. This is Cell division topological specificity factor from Rhizobium rhizogenes (strain K84 / ATCC BAA-868) (Agrobacterium radiobacter).